A 238-amino-acid polypeptide reads, in one-letter code: MEFDFDISQSLPDFITKVDNTLNPFNRQLDVTSRKRLQQNLIVIIDRMGMASAKARLLRRLTAQSLKGAITTAAKLGISDHRLYILKETEVNRGLGKVVGILKVGKKKLFVVDYTGAQHECLPLCVLDFYVHESQQRTGNGKLLFEYMLKAENVTPSHLAIDRPSFKFLSFLQKHYGLRDTLPKQVNNFVVFEDLFNLIRKKKSGGITQHQPTSLKPPIPPTGRRCMHFLNLTIWQTR.

The region spanning 1–196 (MEFDFDISQS…NNFVVFEDLF (196 aa)) is the N-acetyltransferase domain. Acetyl-CoA contacts are provided by residues 129-142 (FYVH…GNGK) and 165-174 (SFKFLSFLQK).

This sequence belongs to the acetyltransferase ATAT1 family.

The enzyme catalyses L-lysyl-[alpha-tubulin] + acetyl-CoA = N(6)-acetyl-L-lysyl-[alpha-tubulin] + CoA + H(+). Specifically acetylates 'Lys-40' in alpha-tubulin on the lumenal side of microtubules. Promotes microtubule destabilization and accelerates microtubule dynamics; this activity may be independent of acetylation activity. Acetylates alpha-tubulin with a slow enzymatic rate, due to a catalytic site that is not optimized for acetyl transfer. Enters the microtubule through each end and diffuses quickly throughout the lumen of microtubules. Acetylates only long/old microtubules because of its slow acetylation rate since it does not have time to act on dynamically unstable microtubules before the enzyme is released. This Trichoplax adhaerens (Trichoplax reptans) protein is Alpha-tubulin N-acetyltransferase.